The primary structure comprises 437 residues: Na(+)/H(+) antiporter NhaA (437 aa).

A run of 11 helical transmembrane segments spans residues 12-32, 65-85, 103-123, 133-153, 162-182, 186-206, 214-234, 308-328, 333-353, 377-397, and 412-432; these read SMNI…AVIA, LTMI…MVGL, ALPF…YSMV, GLAI…SLLG, IFLT…IAIF, HVAY…YFIG, IFFL…GIHS, GAVN…VMFS, VIGG…FLGI, ISGV…IANL, and LGVL…LHWV.

This sequence belongs to the NhaA Na(+)/H(+) (TC 2.A.33) antiporter family.

The protein localises to the cell inner membrane. It carries out the reaction Na(+)(in) + 2 H(+)(out) = Na(+)(out) + 2 H(+)(in). Functionally, na(+)/H(+) antiporter that extrudes sodium in exchange for external protons. The chain is Na(+)/H(+) antiporter NhaA from Bacteroides fragilis (strain YCH46).